A 130-amino-acid polypeptide reads, in one-letter code: Small ribosomal subunit protein uS9 (130 aa).

It belongs to the universal ribosomal protein uS9 family.

This is Small ribosomal subunit protein uS9 from Xanthomonas axonopodis pv. citri (strain 306).